The following is a 161-amino-acid chain: UPF0262 protein SPOA0072 (161 aa).

The interval 1–21 (MTMSRISHIELDDSNLPPPTP) is disordered.

The protein belongs to the UPF0262 family.

This Ruegeria pomeroyi (strain ATCC 700808 / DSM 15171 / DSS-3) (Silicibacter pomeroyi) protein is UPF0262 protein SPOA0072.